Here is a 304-residue protein sequence, read N- to C-terminus: Acetyl-coenzyme A carboxylase carboxyl transferase subunit beta (304 aa).

Positions Val-23 to Val-292 constitute a CoA carboxyltransferase N-terminal domain. The Zn(2+) site is built by Cys-27, Cys-30, Cys-46, and Cys-49. The C4-type zinc finger occupies Cys-27 to Cys-49. Residues Pro-285–Ala-304 are disordered. The segment covering Pro-295–Ala-304 has biased composition (pro residues).

It belongs to the AccD/PCCB family. As to quaternary structure, acetyl-CoA carboxylase is a heterohexamer composed of biotin carboxyl carrier protein (AccB), biotin carboxylase (AccC) and two subunits each of ACCase subunit alpha (AccA) and ACCase subunit beta (AccD). Requires Zn(2+) as cofactor.

The protein localises to the cytoplasm. It catalyses the reaction N(6)-carboxybiotinyl-L-lysyl-[protein] + acetyl-CoA = N(6)-biotinyl-L-lysyl-[protein] + malonyl-CoA. Its pathway is lipid metabolism; malonyl-CoA biosynthesis; malonyl-CoA from acetyl-CoA: step 1/1. Functionally, component of the acetyl coenzyme A carboxylase (ACC) complex. Biotin carboxylase (BC) catalyzes the carboxylation of biotin on its carrier protein (BCCP) and then the CO(2) group is transferred by the transcarboxylase to acetyl-CoA to form malonyl-CoA. This Escherichia coli O6:H1 (strain CFT073 / ATCC 700928 / UPEC) protein is Acetyl-coenzyme A carboxylase carboxyl transferase subunit beta.